We begin with the raw amino-acid sequence, 887 residues long: Alanine--tRNA ligase (887 aa).

The Zn(2+) site is built by His564, His568, Cys675, and His679. A compositionally biased stretch (gly residues) spans 851-866; it reads GQGGGGRPDMAQGGGP. The disordered stretch occupies residues 851–871; the sequence is GQGGGGRPDMAQGGGPDGDKA.

The protein belongs to the class-II aminoacyl-tRNA synthetase family. Zn(2+) serves as cofactor.

It is found in the cytoplasm. It carries out the reaction tRNA(Ala) + L-alanine + ATP = L-alanyl-tRNA(Ala) + AMP + diphosphate. Its function is as follows. Catalyzes the attachment of alanine to tRNA(Ala) in a two-step reaction: alanine is first activated by ATP to form Ala-AMP and then transferred to the acceptor end of tRNA(Ala). Also edits incorrectly charged Ser-tRNA(Ala) and Gly-tRNA(Ala) via its editing domain. This chain is Alanine--tRNA ligase, found in Rhizorhabdus wittichii (strain DSM 6014 / CCUG 31198 / JCM 15750 / NBRC 105917 / EY 4224 / RW1) (Sphingomonas wittichii).